A 416-amino-acid polypeptide reads, in one-letter code: uncharacterized protein (416 aa).

Residues 341–360 (EDREKGSQHTNNTHHHKRNL) form a disordered region.

This is an uncharacterized protein from Human cytomegalovirus (strain AD169) (HHV-5).